We begin with the raw amino-acid sequence, 228 residues long: Ribonuclease 3 (228 aa).

Residues 5–127 form the RNase III domain; it reads LTALQERLKH…LIGAVYLDAG (123 aa). E40 is a Mg(2+) binding site. Residue D44 is part of the active site. 2 residues coordinate Mg(2+): D113 and E116. The active site involves E116. Residues 154-224 enclose the DRBM domain; sequence DPKTELQEWL…AAAMLIRLKA (71 aa).

It belongs to the ribonuclease III family. Homodimer. The cofactor is Mg(2+).

It localises to the cytoplasm. It catalyses the reaction Endonucleolytic cleavage to 5'-phosphomonoester.. In terms of biological role, digests double-stranded RNA. Involved in the processing of primary rRNA transcript to yield the immediate precursors to the large and small rRNAs (23S and 16S). Processes some mRNAs, and tRNAs when they are encoded in the rRNA operon. Processes pre-crRNA and tracrRNA of type II CRISPR loci if present in the organism. The protein is Ribonuclease 3 of Variovorax paradoxus (strain S110).